Here is a 255-residue protein sequence, read N- to C-terminus: HTH-type transcriptional regulator SkgA (255 aa).

An HTH merR-type domain is found at 3–72 (VYTVKQMARL…LKDIQAALDQ (70 aa)). Positions 6–25 (VKQMARLSGVSVRALHHYDA) form a DNA-binding region, H-T-H motif.

In terms of biological role, regulates the induction of katG (catalase-peroxidase) in stationary phase. The polypeptide is HTH-type transcriptional regulator SkgA (skgA) (Caulobacter vibrioides (strain ATCC 19089 / CIP 103742 / CB 15) (Caulobacter crescentus)).